The primary structure comprises 645 residues: Threonine--tRNA ligase (645 aa).

One can recognise a TGS domain in the interval 1–63; the sequence is MEQINIQFPD…ETDGSIEIVT (63 aa). Residues 242–540 form a catalytic region; it reads DHRKIGKELE…LTEETKGAFP (299 aa). The Zn(2+) site is built by cysteine 336, histidine 387, and histidine 517.

It belongs to the class-II aminoacyl-tRNA synthetase family. As to quaternary structure, homodimer. The cofactor is Zn(2+).

Its subcellular location is the cytoplasm. It catalyses the reaction tRNA(Thr) + L-threonine + ATP = L-threonyl-tRNA(Thr) + AMP + diphosphate + H(+). Functionally, catalyzes the attachment of threonine to tRNA(Thr) in a two-step reaction: L-threonine is first activated by ATP to form Thr-AMP and then transferred to the acceptor end of tRNA(Thr). Also edits incorrectly charged L-seryl-tRNA(Thr). This is Threonine--tRNA ligase from Staphylococcus aureus (strain JH1).